The primary structure comprises 280 residues: Large ribosomal subunit protein uL2 (280 aa).

Disordered stretches follow at residues 29–58 and 225–280; these read PEKS…GGGH and VMNP…NKKR. Over residues 45 to 58 the composition is skewed to basic residues; it reads SHGHITTRHRGGGH. Residues 253–269 show a composition bias toward basic and acidic residues; the sequence is KEGRTRKPKRYSDDMIV. Over residues 270 to 280 the composition is skewed to basic residues; it reads RRRRANKNKKR.

It belongs to the universal ribosomal protein uL2 family. Part of the 50S ribosomal subunit. Forms a bridge to the 30S subunit in the 70S ribosome.

Its function is as follows. One of the primary rRNA binding proteins. Required for association of the 30S and 50S subunits to form the 70S ribosome, for tRNA binding and peptide bond formation. It has been suggested to have peptidyltransferase activity; this is somewhat controversial. Makes several contacts with the 16S rRNA in the 70S ribosome. This chain is Large ribosomal subunit protein uL2, found in Corynebacterium glutamicum (strain R).